We begin with the raw amino-acid sequence, 458 residues long: Phosphoglucosamine mutase (458 aa).

The active-site Phosphoserine intermediate is serine 106. Mg(2+)-binding residues include serine 106, aspartate 247, aspartate 249, and aspartate 251. At serine 106 the chain carries Phosphoserine.

This sequence belongs to the phosphohexose mutase family. The cofactor is Mg(2+). Activated by phosphorylation.

It carries out the reaction alpha-D-glucosamine 1-phosphate = D-glucosamine 6-phosphate. In terms of biological role, catalyzes the conversion of glucosamine-6-phosphate to glucosamine-1-phosphate. The protein is Phosphoglucosamine mutase of Chlamydia caviae (strain ATCC VR-813 / DSM 19441 / 03DC25 / GPIC) (Chlamydophila caviae).